A 99-amino-acid polypeptide reads, in one-letter code: Small ribosomal subunit protein eS24 (99 aa).

The protein belongs to the eukaryotic ribosomal protein eS24 family.

The polypeptide is Small ribosomal subunit protein eS24 (Pyrococcus horikoshii (strain ATCC 700860 / DSM 12428 / JCM 9974 / NBRC 100139 / OT-3)).